We begin with the raw amino-acid sequence, 561 residues long: MSSGKYRQQEIRAPRGTTLTAKSWLTEAPLRMLMNNLDPEVAENPNELVVYGGIGRAARNWECYDAIVDSLTHLESDETLLVQSGKPVGVFKTHENAPRVLIANSNLVPHWATWEHFNELDAKGLAMYGQMTAGSWIYIGSQGIVQGTYETFVEAGRQHYNGSLKGRWVLTAGLGGMGGAQPLAATLAGACSLNIECQQSRIDFRLRTRYVDEQADNLDDALARINKYTSQGKTVSIALCGNAADIVPELVARGVRPDLVTDQTSAHDPLHGYLPTGWSWEEYQQKAKTDPEGTVLAAKKSMAEHVRAMLAFSDMGVPTFDYGNNIRQMAKEIGVENAFDFPGFVPAYIRPLFCRGIGPFRWVALSGDPQDIYKTDAKVKEIVADDAHLHHWLDMARERINFQGLPARICWVGLEWRQKLGLAFNEMVRSGEVSAPIVIGRDHLDSGSVASPNRETEAMQDGSDAVSDWPLLNALLNTASGATWVSLHHGGGVGMGFSQHAGMVIVCDGTDEAAARIARVLHNDPATGVMRHADAGYDIAIDCAKEQGLNLPMIAATQGKH.

NAD(+)-binding positions include 52–53 (GG), glutamine 130, 176–178 (GMG), glutamate 196, arginine 201, 242–243 (NA), 263–267 (QTSAH), 273–274 (YL), and tyrosine 322. Cysteine 410 is a catalytic residue. Glycine 492 contributes to the NAD(+) binding site.

Belongs to the urocanase family. It depends on NAD(+) as a cofactor.

It is found in the cytoplasm. The enzyme catalyses 4-imidazolone-5-propanoate = trans-urocanate + H2O. It participates in amino-acid degradation; L-histidine degradation into L-glutamate; N-formimidoyl-L-glutamate from L-histidine: step 2/3. Catalyzes the conversion of urocanate to 4-imidazolone-5-propionate. The protein is Urocanate hydratase of Enterobacter sp. (strain 638).